Here is a 505-residue protein sequence, read N- to C-terminus: 2,3-bisphosphoglycerate-independent phosphoglycerate mutase (505 aa).

Positions 13 and 63 each coordinate Mn(2+). The Phosphoserine intermediate role is filled by Ser-63. Substrate is bound by residues His-124, 153–154 (RD), Arg-183, Arg-189, 254–257 (RADR), and Lys-330. The Mn(2+) site is built by Asp-396, His-400, Asp-437, His-438, and His-456.

The protein belongs to the BPG-independent phosphoglycerate mutase family. As to quaternary structure, monomer. Requires Mn(2+) as cofactor.

It carries out the reaction (2R)-2-phosphoglycerate = (2R)-3-phosphoglycerate. It participates in carbohydrate degradation; glycolysis; pyruvate from D-glyceraldehyde 3-phosphate: step 3/5. Catalyzes the interconversion of 2-phosphoglycerate and 3-phosphoglycerate. This chain is 2,3-bisphosphoglycerate-independent phosphoglycerate mutase, found in Dinoroseobacter shibae (strain DSM 16493 / NCIMB 14021 / DFL 12).